Here is a 252-residue protein sequence, read N- to C-terminus: Large ribosomal subunit protein uL29m (252 aa).

The N-terminal 39 residues, 1 to 39 (MSTSTVIRPVARSLLQLRKAGNTPPAFLLPCLQSSSTTS), are a transit peptide targeting the mitochondrion. Positions 233 to 242 (EDVLAEAEGE) are enriched in acidic residues. A disordered region spans residues 233 to 252 (EDVLAEAEGEAEPKPAQVTA).

The protein belongs to the universal ribosomal protein uL29 family. As to quaternary structure, component of the mitochondrial large ribosomal subunit. Mature mitochondrial ribosomes consist of a small (37S) and a large (54S) subunit. The 37S subunit contains at least 33 different proteins and 1 molecule of RNA (15S). The 54S subunit contains at least 45 different proteins and 1 molecule of RNA (21S).

It is found in the mitochondrion. The polypeptide is Large ribosomal subunit protein uL29m (mrpl4) (Botryotinia fuckeliana (strain B05.10) (Noble rot fungus)).